Reading from the N-terminus, the 629-residue chain is Bifunctional protein ArgHA (629 aa).

An argininosuccinate lyase region spans residues 1–499; sequence MALWGGRFSQ…NLPRSRSDLV (499 aa). Positions 464-598 constitute an N-acetyltransferase domain; sequence ISIRAARLTD…EKVLKDCDMC (135 aa). Residues 500 to 629 are amino-acid acetyltransferase; it reads KAVGTFAVTE…INLKAEKLAS (130 aa).

In the N-terminal section; belongs to the lyase 1 family. Argininosuccinate lyase subfamily. This sequence in the C-terminal section; belongs to the acetyltransferase family. ArgA subfamily.

It localises to the cytoplasm. It carries out the reaction 2-(N(omega)-L-arginino)succinate = fumarate + L-arginine. It catalyses the reaction L-glutamate + acetyl-CoA = N-acetyl-L-glutamate + CoA + H(+). It participates in amino-acid biosynthesis; L-arginine biosynthesis; N(2)-acetyl-L-ornithine from L-glutamate: step 1/4. Its pathway is amino-acid biosynthesis; L-arginine biosynthesis; L-arginine from L-ornithine and carbamoyl phosphate: step 3/3. In Moritella abyssi, this protein is Bifunctional protein ArgHA (argHA).